The sequence spans 187 residues: MIDSVNRADLFLRKPAPVALELQNEIEQFYYWEAKLLNDRRFDEWFALLAKDIHYFMPIRTTRIMRDSRLEYSGLRDYAHFDDDATMMKGRLRKITSDVSWSENPASRTRHIVSNVMIIPTEVEGEYEISSTFIVYRNRLERQLDIFAGERRDRLRRNKGEAGFEIVNRTILIDQSTILANNLSFFF.

This sequence belongs to the bacterial ring-hydroxylating dioxygenase beta subunit family. In terms of assembly, this dioxygenase system consists of four proteins: the two subunits of the hydroxylase component (BedC1 and BedC2), a ferredoxin (BedB) and a ferredoxin reductase (BedA).

It carries out the reaction benzene + NADH + O2 + H(+) = cis-1,2-dihydrobenzene-1,2-diol + NAD(+). It functions in the pathway aromatic compound metabolism; benzene degradation; catechol from benzene: step 1/2. The beta subunit may be responsible for the substrate specificity of the enzyme. The chain is Benzene 1,2-dioxygenase subunit beta (bedC2) from Pseudomonas putida (Arthrobacter siderocapsulatus).